Reading from the N-terminus, the 253-residue chain is uncharacterized protein (253 aa).

Positions Ala30 to Ala236 constitute a BPL/LPL catalytic domain.

This is an uncharacterized protein from Cupriavidus necator (strain ATCC 17699 / DSM 428 / KCTC 22496 / NCIMB 10442 / H16 / Stanier 337) (Ralstonia eutropha).